We begin with the raw amino-acid sequence, 80 residues long: RNA-binding protein Hfq (80 aa).

The Sm domain maps to 10–70 (DAFLNQVRKE…ISTISPLRPV (61 aa)).

Belongs to the Hfq family. Homohexamer.

Its function is as follows. RNA chaperone that binds small regulatory RNA (sRNAs) and mRNAs to facilitate mRNA translational regulation in response to envelope stress, environmental stress and changes in metabolite concentrations. Also binds with high specificity to tRNAs. The protein is RNA-binding protein Hfq of Desulforamulus reducens (strain ATCC BAA-1160 / DSM 100696 / MI-1) (Desulfotomaculum reducens).